We begin with the raw amino-acid sequence, 479 residues long: ATP synthase subunit beta, chloroplastic (479 aa).

156-163 (GGAGVGKT) contacts ATP.

The protein belongs to the ATPase alpha/beta chains family. F-type ATPases have 2 components, CF(1) - the catalytic core - and CF(0) - the membrane proton channel. CF(1) has five subunits: alpha(3), beta(3), gamma(1), delta(1), epsilon(1). CF(0) has four main subunits: a(1), b(1), b'(1) and c(9-12).

It localises to the plastid. It is found in the chloroplast thylakoid membrane. It catalyses the reaction ATP + H2O + 4 H(+)(in) = ADP + phosphate + 5 H(+)(out). Its function is as follows. Produces ATP from ADP in the presence of a proton gradient across the membrane. The catalytic sites are hosted primarily by the beta subunits. The sequence is that of ATP synthase subunit beta, chloroplastic from Trichomanes davallioides (Kilau fern).